Consider the following 466-residue polypeptide: MNGGTFTTGKEKERAGIYFNFKTTAQERVSLSERGTVALPVASSWGEAKTFVSISSVEDLNKKVGLSIDDPSLLLLREAKKNAKTVLMYRLTEGVRASADIAEGVKATAVYGGTKGNDIIIRINQNVLDANSFDVTTYMDESEVDKQTVKKAEELTANGYVTFTGTGDLSSTIPLTGSEGDTAAETLNASAGIRLSGGTDKAPVNSDYTDFLAAAETESFDVIALPVAEGDQLKATFAAFIKRLRDGQGQKVQGVTANYAGDYEGIINVTEGVLLEDGTEVTPDKATAWVAGASAGATFNQSLTFVEYEGAVDVLHRLDHDTIVERLGKGEFLFTFDARDKSVSVEKDINSLVTFTAEKNKKFAKNKIVRVLDAVNNDLTRELKALIKSRKGSGSDIPASEDGLQYVKTMITQYMTTLQDAGGITGFDSDEDITISMNEDRDGFLIDLAVQPVDAAEKFYFNVEVN.

This sequence belongs to the myoviridae tail sheath protein family.

The polypeptide is Phage-like element PBSX protein XkdK (xkdK) (Bacillus subtilis (strain 168)).